The sequence spans 318 residues: Acetyl-coenzyme A carboxylase carboxyl transferase subunit alpha (318 aa).

The region spanning D32–E293 is the CoA carboxyltransferase C-terminal domain.

It belongs to the AccA family. Acetyl-CoA carboxylase is a heterohexamer composed of biotin carboxyl carrier protein (AccB), biotin carboxylase (AccC) and two subunits each of ACCase subunit alpha (AccA) and ACCase subunit beta (AccD).

It localises to the cytoplasm. It catalyses the reaction N(6)-carboxybiotinyl-L-lysyl-[protein] + acetyl-CoA = N(6)-biotinyl-L-lysyl-[protein] + malonyl-CoA. It participates in lipid metabolism; malonyl-CoA biosynthesis; malonyl-CoA from acetyl-CoA: step 1/1. In terms of biological role, component of the acetyl coenzyme A carboxylase (ACC) complex. First, biotin carboxylase catalyzes the carboxylation of biotin on its carrier protein (BCCP) and then the CO(2) group is transferred by the carboxyltransferase to acetyl-CoA to form malonyl-CoA. The polypeptide is Acetyl-coenzyme A carboxylase carboxyl transferase subunit alpha (Syntrophomonas wolfei subsp. wolfei (strain DSM 2245B / Goettingen)).